Consider the following 411-residue polypeptide: Intracellular hyaluronan-binding protein 4 (411 aa).

A phosphoserine mark is found at serine 7 and serine 36. Residues 42–62 adopt a coiled-coil conformation; it reads LREAEHRRQQQLQRKRRDEAA. Positions 42–271 are disordered; that stretch reads LREAEHRRQQ…ECQGTLDEES (230 aa). Arginine 70 bears the Omega-N-methylarginine mark. Serine 74 carries the post-translational modification Phosphoserine. The span at 87 to 97 shows a compositional bias: basic and acidic residues; the sequence is GRRESQKERKS. Residue serine 108 is modified to Phosphoserine. Basic and acidic residues-rich tracts occupy residues 138-181 and 205-229; these read VLER…DRPL and DSFD…RMED. Glycyl lysine isopeptide (Lys-Gly) (interchain with G-Cter in SUMO1); alternate cross-links involve residues lysine 212 and lysine 274. Glycyl lysine isopeptide (Lys-Gly) (interchain with G-Cter in SUMO2); alternate cross-links involve residues lysine 212 and lysine 274. A coiled-coil region spans residues 279–301; the sequence is EVEEENQVQEMTLDEWKNLQEQT. The segment covering 296–313 has biased composition (basic and acidic residues); sequence NLQEQTRPKPEFNIRKPE. Residues 296–318 are disordered; it reads NLQEQTRPKPEFNIRKPESTVPS. A Glycyl lysine isopeptide (Lys-Gly) (interchain with G-Cter in SUMO1); alternate cross-link involves residue lysine 334. Lysine 334 is covalently cross-linked (Glycyl lysine isopeptide (Lys-Gly) (interchain with G-Cter in SUMO2); alternate). Threonine 352 and threonine 373 each carry phosphothreonine; by PKC. Residues 358-411 are disordered; that stretch reads NFGNLPRPGRGARGSTRGGRGRMRRTENYGPRAEVVTQDVAPNPDDPEDFPALA. Residues 402 to 411 show a composition bias toward acidic residues; it reads DDPEDFPALA.

This sequence belongs to the SERBP1-HABP4 family. As to quaternary structure, associates with ribosomes; promoting ribosome stabilization. Interacts with EEF2/eEF2; promoting ribosome stabilization. Interacts with FMR1. Interacts with FXR1 and FXR2. Interacts with CHD3 (via C-terminus). Interacts (via C-terminus) with RACK1. Interacts with p53/TP53. Interacts (via N-terminus) with SRSF9; this interaction is direct. Interacts with SYNCRIP; this interaction is direct. Interacts with MEF2C (via N-terminus); this interaction decreases DNA-binding activity of MEF2C in myocardial cells in response to mechanical stress. Interacts with PRMT1 (via N-terminus). Interacts with SPIN1. In terms of processing, phosphorylated by phorbol 12-myristate 13-acetate (PMA)-activated PKC isoforms at Thr-352 and Thr-373. Post-translationally, methylated. Methylation is decreased by phorbol 12-myristate 13-acetate (PMA)-activated PKC, in vitro. Expressed in adult heart, brain, liver, kidney, testis, and in various embryonic tissues, but not in adult spleen, lung or skeletal muscle.

Its subcellular location is the nucleus. The protein resides in the cytoplasm. The protein localises to the stress granule. It is found in the sarcoplasm. It localises to the nuclear body. Its subcellular location is the nucleolus. The protein resides in the nucleus speckle. The protein localises to the cajal body. It is found in the gem. Ribosome-binding protein that promotes ribosome hibernation, a process during which ribosomes are stabilized in an inactive state and preserved from proteasomal degradation. Acts via its association with EEF2/eEF2 factor at the A-site of the ribosome, promoting ribosome stabilization in an inactive state compatible with storage. Plays a key role in ribosome hibernation in the mature oocyte by promoting ribosome stabilization. Ribosomes, which are produced in large quantities during oogenesis, are stored and translationally repressed in the oocyte and early embryo. Also binds RNA, regulating transcription and pre-mRNA splicing. Binds (via C-terminus) to poly(U) RNA. Seems to play a role in PML-nuclear bodies formation. Negatively regulates DNA-binding activity of the transcription factor MEF2C in myocardial cells in response to mechanical stress. This Mus musculus (Mouse) protein is Intracellular hyaluronan-binding protein 4.